Consider the following 583-residue polypeptide: Aspartate--tRNA ligase (583 aa).

E174 is an L-aspartate binding site. Positions 198-201 (QITK) are aspartate. Residue R220 coordinates L-aspartate. ATP-binding positions include 220-222 (RDE) and Q229. H443 is a binding site for L-aspartate. E477 contacts ATP. R484 contacts L-aspartate. 529–532 (GLDR) provides a ligand contact to ATP.

The protein belongs to the class-II aminoacyl-tRNA synthetase family. Type 1 subfamily. As to quaternary structure, homodimer.

It is found in the cytoplasm. The catalysed reaction is tRNA(Asp) + L-aspartate + ATP = L-aspartyl-tRNA(Asp) + AMP + diphosphate. Catalyzes the attachment of L-aspartate to tRNA(Asp) in a two-step reaction: L-aspartate is first activated by ATP to form Asp-AMP and then transferred to the acceptor end of tRNA(Asp). This is Aspartate--tRNA ligase from Streptococcus suis (strain 98HAH33).